Reading from the N-terminus, the 255-residue chain is Small ribosomal subunit protein uS2 (255 aa).

The tract at residues 231 to 255 is disordered; it reads RLQTGAEEEFSTEGEEVVEETPAEA. A compositionally biased stretch (acidic residues) spans 236 to 255; the sequence is AEEEFSTEGEEVVEETPAEA.

The protein belongs to the universal ribosomal protein uS2 family.

The sequence is that of Small ribosomal subunit protein uS2 from Citrifermentans bemidjiense (strain ATCC BAA-1014 / DSM 16622 / JCM 12645 / Bem) (Geobacter bemidjiensis).